We begin with the raw amino-acid sequence, 86 residues long: Translation machinery-associated protein 10 (86 aa).

Serine 28 and serine 79 each carry phosphoserine. The segment at 63–86 is disordered; the sequence is NKTRRGSNSQNNERRLSDLQQYHI.

Belongs to the STF2 family. As to quaternary structure, associates with ribosomes.

Its subcellular location is the cytoplasm. It localises to the nucleus. In terms of biological role, may be involved in inhibition of the reverse ATPase reaction of mitochondrial F(1)F(0)-type ATP synthase. This chain is Translation machinery-associated protein 10, found in Saccharomyces cerevisiae (strain ATCC 204508 / S288c) (Baker's yeast).